The chain runs to 200 residues: NADH-quinone oxidoreductase subunit B (200 aa).

Residues Cys-78, Cys-79, Cys-144, and Cys-174 each contribute to the [4Fe-4S] cluster site.

This sequence belongs to the complex I 20 kDa subunit family. NDH-1 is composed of 14 different subunits. Subunits NuoB, C, D, E, F, and G constitute the peripheral sector of the complex. [4Fe-4S] cluster is required as a cofactor.

Its subcellular location is the cell membrane. The enzyme catalyses a quinone + NADH + 5 H(+)(in) = a quinol + NAD(+) + 4 H(+)(out). NDH-1 shuttles electrons from NADH, via FMN and iron-sulfur (Fe-S) centers, to quinones in the respiratory chain. The immediate electron acceptor for the enzyme in this species is believed to be ubiquinone. Couples the redox reaction to proton translocation (for every two electrons transferred, four hydrogen ions are translocated across the cytoplasmic membrane), and thus conserves the redox energy in a proton gradient. In Dehalococcoides mccartyi (strain ATCC BAA-2266 / KCTC 15142 / 195) (Dehalococcoides ethenogenes (strain 195)), this protein is NADH-quinone oxidoreductase subunit B.